The following is a 257-amino-acid chain: 2,3,4,5-tetrahydropyridine-2,6-dicarboxylate N-acetyltransferase (257 aa).

This sequence belongs to the transferase hexapeptide repeat family. DapH subfamily.

The catalysed reaction is (S)-2,3,4,5-tetrahydrodipicolinate + acetyl-CoA + H2O = L-2-acetamido-6-oxoheptanedioate + CoA. It participates in amino-acid biosynthesis; L-lysine biosynthesis via DAP pathway; LL-2,6-diaminopimelate from (S)-tetrahydrodipicolinate (acetylase route): step 1/3. In terms of biological role, catalyzes the transfer of an acetyl group from acetyl-CoA to tetrahydrodipicolinate. The sequence is that of 2,3,4,5-tetrahydropyridine-2,6-dicarboxylate N-acetyltransferase from Lactococcus lactis subsp. cremoris (strain SK11).